The following is a 143-amino-acid chain: Transcriptional regulator MraZ (143 aa).

SpoVT-AbrB domains lie at 5 to 47 (TYTP…PKEE) and 76 to 119 (ADEQ…DAQA).

Belongs to the MraZ family. As to quaternary structure, forms oligomers.

Its subcellular location is the cytoplasm. It localises to the nucleoid. This Corynebacterium efficiens (strain DSM 44549 / YS-314 / AJ 12310 / JCM 11189 / NBRC 100395) protein is Transcriptional regulator MraZ.